The sequence spans 631 residues: Polyadenylate-binding protein 3 (631 aa).

4 consecutive RRM domains span residues 11–89 (ASLY…WSQR), 99–175 (GNIF…QFKS), 191–268 (PNVY…RAQK), and 294–370 (VNLY…LAQR). A Phosphotyrosine modification is found at tyrosine 140. Residue serine 315 is modified to Phosphoserine. N6,N6-dimethyllysine; alternate is present on lysine 361. Lysine 361 is covalently cross-linked (Glycyl lysine isopeptide (Lys-Gly) (interchain with G-Cter in SUMO2); alternate). The residue at position 364 (tyrosine 364) is a Phosphotyrosine. Arginine 426, arginine 430, and arginine 449 each carry omega-N-methylarginine. Arginine 501 bears the Dimethylated arginine mark. Arginine 513 is subject to Omega-N-methylarginine. The PABC domain maps to 537 to 614 (QETLTASRLA…AVAVLQAHQA (78 aa)).

This sequence belongs to the polyadenylate-binding protein type-1 family. As to expression, testis specific.

The protein resides in the cytoplasm. Functionally, binds the poly(A) tail of mRNA. May be involved in cytoplasmic regulatory processes of mRNA metabolism. Binds poly(A) with a slightly lower affinity as compared to PABPC1. This is Polyadenylate-binding protein 3 (PABPC3) from Homo sapiens (Human).